A 319-amino-acid chain; its full sequence is Acetyl-coenzyme A carboxylase carboxyl transferase subunit alpha (319 aa).

A CoA carboxyltransferase C-terminal domain is found at 35–296; sequence NIDEEVHRLR…KAQLLADLAD (262 aa).

Belongs to the AccA family. As to quaternary structure, acetyl-CoA carboxylase is a heterohexamer composed of biotin carboxyl carrier protein (AccB), biotin carboxylase (AccC) and two subunits each of ACCase subunit alpha (AccA) and ACCase subunit beta (AccD).

The protein resides in the cytoplasm. It carries out the reaction N(6)-carboxybiotinyl-L-lysyl-[protein] + acetyl-CoA = N(6)-biotinyl-L-lysyl-[protein] + malonyl-CoA. Its pathway is lipid metabolism; malonyl-CoA biosynthesis; malonyl-CoA from acetyl-CoA: step 1/1. Its function is as follows. Component of the acetyl coenzyme A carboxylase (ACC) complex. First, biotin carboxylase catalyzes the carboxylation of biotin on its carrier protein (BCCP) and then the CO(2) group is transferred by the carboxyltransferase to acetyl-CoA to form malonyl-CoA. The sequence is that of Acetyl-coenzyme A carboxylase carboxyl transferase subunit alpha from Shigella boydii serotype 4 (strain Sb227).